We begin with the raw amino-acid sequence, 328 residues long: 4-hydroxy-3-methylbut-2-enyl diphosphate reductase (328 aa).

Residue Cys24 participates in [4Fe-4S] cluster binding. His55 and His88 together coordinate (2E)-4-hydroxy-3-methylbut-2-enyl diphosphate. Residues His55 and His88 each contribute to the dimethylallyl diphosphate site. 2 residues coordinate isopentenyl diphosphate: His55 and His88. Cys110 contacts [4Fe-4S] cluster. His138 contacts (2E)-4-hydroxy-3-methylbut-2-enyl diphosphate. His138 is a dimethylallyl diphosphate binding site. Position 138 (His138) interacts with isopentenyl diphosphate. The Proton donor role is filled by Glu140. Thr178 lines the (2E)-4-hydroxy-3-methylbut-2-enyl diphosphate pocket. A [4Fe-4S] cluster-binding site is contributed by Cys208. 4 residues coordinate (2E)-4-hydroxy-3-methylbut-2-enyl diphosphate: Ser236, Ser237, Asn238, and Ser279. Dimethylallyl diphosphate-binding residues include Ser236, Ser237, Asn238, and Ser279. Isopentenyl diphosphate contacts are provided by Ser236, Ser237, Asn238, and Ser279.

It belongs to the IspH family. Requires [4Fe-4S] cluster as cofactor.

The catalysed reaction is isopentenyl diphosphate + 2 oxidized [2Fe-2S]-[ferredoxin] + H2O = (2E)-4-hydroxy-3-methylbut-2-enyl diphosphate + 2 reduced [2Fe-2S]-[ferredoxin] + 2 H(+). The enzyme catalyses dimethylallyl diphosphate + 2 oxidized [2Fe-2S]-[ferredoxin] + H2O = (2E)-4-hydroxy-3-methylbut-2-enyl diphosphate + 2 reduced [2Fe-2S]-[ferredoxin] + 2 H(+). It functions in the pathway isoprenoid biosynthesis; dimethylallyl diphosphate biosynthesis; dimethylallyl diphosphate from (2E)-4-hydroxy-3-methylbutenyl diphosphate: step 1/1. Its pathway is isoprenoid biosynthesis; isopentenyl diphosphate biosynthesis via DXP pathway; isopentenyl diphosphate from 1-deoxy-D-xylulose 5-phosphate: step 6/6. Functionally, catalyzes the conversion of 1-hydroxy-2-methyl-2-(E)-butenyl 4-diphosphate (HMBPP) into a mixture of isopentenyl diphosphate (IPP) and dimethylallyl diphosphate (DMAPP). Acts in the terminal step of the DOXP/MEP pathway for isoprenoid precursor biosynthesis. The chain is 4-hydroxy-3-methylbut-2-enyl diphosphate reductase from Ehrlichia ruminantium (strain Welgevonden).